A 110-amino-acid chain; its full sequence is Class I hydrophobin 2 (110 aa).

Positions 1-17 (MQFKFLTTVALATLAVA) are cleaved as a signal peptide. 4 cysteine pairs are disulfide-bonded: C28–C89, C36–C83, C37–C71, and C90–C103. A glycan (N-linked (GlcNAc...) asparagine) is linked at N57.

It belongs to the fungal hydrophobin family. Self-assembles to form functional amyloid fibrils called rodlets. Self-assembly into fibrillar rodlets occurs spontaneously at hydrophobic:hydrophilic interfaces and the rodlets further associate laterally to form amphipathic monolayers.

Its subcellular location is the secreted. It localises to the cell wall. Aerial growth, conidiation, and dispersal of filamentous fungi in the environment rely upon a capability of their secreting small amphipathic proteins called hydrophobins (HPBs) with low sequence identity. Class I can self-assemble into an outermost layer of rodlet bundles on aerial cell surfaces, conferring cellular hydrophobicity that supports fungal growth, development and dispersal; whereas Class II form highly ordered films at water-air interfaces through intermolecular interactions but contribute nothing to the rodlet structure. CoH2 is an asexual monokaryon-specific class I hydrophobin that is involved in aerial growth of mycelia. The protein is Class I hydrophobin 2 of Coprinopsis cinerea (Inky cap fungus).